Here is a 96-residue protein sequence, read N- to C-terminus: ESAT-6-like protein EsxH (96 aa).

4 residues coordinate Zn(2+): histidine 14, histidine 70, histidine 76, and glutamate 77.

The protein belongs to the WXG100 family. ESAT-6 subfamily. In terms of assembly, forms a tight 1:1 complex with EsxG. When it is complexed to EsxG, interacts directly with host HGS/HRS.

The protein resides in the secreted. Functionally, esxH, in complex with EsxG, disrupts ESCRT function and impairs host phagosome maturation, thereby promoting intracellular bacterial growth. The complex acts by interacting, via EsxH, with the host hepatocyte growth factor-regulated tyrosine kinase substrate (HGS/HRS), a component of the ESCRT machinery. The polypeptide is ESAT-6-like protein EsxH (Mycobacterium tuberculosis (strain ATCC 25618 / H37Rv)).